A 234-amino-acid chain; its full sequence is Small ribosomal subunit protein uS3 (234 aa).

Residues isoleucine 39–lysine 107 enclose the KH type-2 domain.

Belongs to the universal ribosomal protein uS3 family. As to quaternary structure, part of the 30S ribosomal subunit. Forms a tight complex with proteins S10 and S14.

In terms of biological role, binds the lower part of the 30S subunit head. Binds mRNA in the 70S ribosome, positioning it for translation. The sequence is that of Small ribosomal subunit protein uS3 from Helicobacter acinonychis (strain Sheeba).